The following is a 301-amino-acid chain: Mitochondrial carnitine/acylcarnitine carrier protein (301 aa).

The residue at position 2 (Ala-2) is an N-acetylalanine. Residues 2–12 are Cytoplasmic-facing; that stretch reads ADEPKPISPFK. Solcar repeat units lie at residues 8–99, 108–196, and 207–293; these read ISPF…GKKL, LSYP…LKNL, and LSVP…AMKF. Residues 13–31 traverse the membrane as a helical segment; it reads NLLAGGFGGMCLVFVGHPL. Topologically, residues 32-73 are mitochondrial matrix; sequence DTVKVRLQTQPPSLSGQPPMYSGTLDCFRKTLMREGITGLYR. Residues 74 to 93 traverse the membrane as a helical segment; that stretch reads GMAAPIIGVTPMFAVCFFGF. The Cytoplasmic portion of the chain corresponds to 94–112; that stretch reads GLGKKLQQKSPEDELSYPQ. A helical membrane pass occupies residues 113 to 131; sequence LFTAGMLSGVFTTGIMTPG. At 132-170 the chain is on the mitochondrial matrix side; that stretch reads ERIKCLLQIQASSGENKYSGTLDCAKKLYQEFGIRGFYK. Residues Lys-148 and Lys-157 each carry the N6-acetyllysine modification. Lys-170 bears the N6-acetyllysine; alternate mark. Position 170 is an N6-succinyllysine; alternate (Lys-170). Residues 171–190 form a helical membrane-spanning segment; the sequence is GTVLTLMRDVPASGMYFMTY. At 191 to 211 the chain is on the cytoplasmic side; sequence EWLKNLFTPEGKSVSDLSVPR. A helical transmembrane segment spans residues 212–230; it reads ILVAGGFAGIFNWAVAIPP. Residues 231–267 lie on the Mitochondrial matrix side of the membrane; the sequence is DVLKSRFQTAPPGKYPNGFRDVLRELIREEGVTSLYK. A helical transmembrane segment spans residues 268–287; that stretch reads GFNAVMIRAFPANAACFLGF. The Cytoplasmic portion of the chain corresponds to 288–301; sequence EIAMKFLNWIAPNL.

Belongs to the mitochondrial carrier (TC 2.A.29) family. Widely expressed, with highest levels in the liver, intermediate levels in heart, testis and kidney and low levels in brain, including cortex, cerebellum, hippocampus and hypothalamus.

The protein localises to the mitochondrion inner membrane. It catalyses the reaction O-acetyl-(R)-carnitine(in) + (R)-carnitine(out) = O-acetyl-(R)-carnitine(out) + (R)-carnitine(in). The catalysed reaction is an O-acyl-(R)-carnitine(in) + (R)-carnitine(out) = an O-acyl-(R)-carnitine(out) + (R)-carnitine(in). The enzyme catalyses O-propanoyl-(R)-carnitine(in) + (R)-carnitine(out) = O-propanoyl-(R)-carnitine(out) + (R)-carnitine(in). It carries out the reaction O-hexadecanoyl-(R)-carnitine(in) + (R)-carnitine(out) = O-hexadecanoyl-(R)-carnitine(out) + (R)-carnitine(in). It catalyses the reaction O-octanoyl-(R)-carnitine(in) + (R)-carnitine(out) = O-octanoyl-(R)-carnitine(out) + (R)-carnitine(in). The catalysed reaction is (R)-carnitine(in) = (R)-carnitine(out). Mediates the electroneutral exchange of acylcarnitines (O-acyl-(R)-carnitine or L-acylcarnitine) of different acyl chain lengths (ranging from O-acetyl-(R)-carnitine to long-chain O-acyl-(R)-carnitines) with free carnitine ((R)-carnitine or L-carnitine) across the mitochondrial inner membrane, via a ping-pong mechanism. Key player in the mitochondrial oxidation pathway, it translocates the fatty acids in the form of acylcarnitines into the mitochondrial matrix, where the carnitine palmitoyltransferase 2 (CPT-2) activates them to undergo fatty acid beta-oxidation. Catalyzes the unidirectional transport (uniport) of carnitine at lower rates than the antiport (exchange). The polypeptide is Mitochondrial carnitine/acylcarnitine carrier protein (Mus musculus (Mouse)).